The chain runs to 247 residues: Uridylate kinase (247 aa).

18–21 (KLSG) provides a ligand contact to ATP. A UMP-binding site is contributed by G60. ATP-binding residues include G61 and R65. UMP-binding positions include D80 and 141–148 (TGNPFFTT). Residues T168, Y174, and D177 each coordinate ATP.

Belongs to the UMP kinase family. Homohexamer.

The protein resides in the cytoplasm. The enzyme catalyses UMP + ATP = UDP + ADP. The protein operates within pyrimidine metabolism; CTP biosynthesis via de novo pathway; UDP from UMP (UMPK route): step 1/1. With respect to regulation, inhibited by UTP. In terms of biological role, catalyzes the reversible phosphorylation of UMP to UDP. The polypeptide is Uridylate kinase (Pseudomonas fluorescens (strain ATCC BAA-477 / NRRL B-23932 / Pf-5)).